Consider the following 593-residue polypeptide: Aspartate--tRNA ligase (593 aa).

Glu180 is a binding site for L-aspartate. Residues 204 to 207 (QIFK) are aspartate. Position 226 (Arg226) interacts with L-aspartate. ATP contacts are provided by residues 226–228 (RDE) and Gln235. His453 lines the L-aspartate pocket. Glu487 contributes to the ATP binding site. Residue Arg494 coordinates L-aspartate. 539-542 (GLDR) lines the ATP pocket.

The protein belongs to the class-II aminoacyl-tRNA synthetase family. Type 1 subfamily. Homodimer.

It is found in the cytoplasm. The enzyme catalyses tRNA(Asp) + L-aspartate + ATP = L-aspartyl-tRNA(Asp) + AMP + diphosphate. In terms of biological role, catalyzes the attachment of L-aspartate to tRNA(Asp) in a two-step reaction: L-aspartate is first activated by ATP to form Asp-AMP and then transferred to the acceptor end of tRNA(Asp). This Clostridium botulinum (strain ATCC 19397 / Type A) protein is Aspartate--tRNA ligase.